The following is a 296-amino-acid chain: Cytidine deaminase (296 aa).

CMP/dCMP-type deaminase domains follow at residues 47–167 and 186–296; these read TEAE…FGPK and DSAD…IDPV. 88–90 provides a ligand contact to substrate; that stretch reads NLE. His-101 lines the Zn(2+) pocket. Residue Glu-103 is the Proton donor of the active site. 2 residues coordinate Zn(2+): Cys-128 and Cys-131.

It belongs to the cytidine and deoxycytidylate deaminase family. Homodimer. Zn(2+) is required as a cofactor.

It carries out the reaction cytidine + H2O + H(+) = uridine + NH4(+). The enzyme catalyses 2'-deoxycytidine + H2O + H(+) = 2'-deoxyuridine + NH4(+). This enzyme scavenges exogenous and endogenous cytidine and 2'-deoxycytidine for UMP synthesis. The polypeptide is Cytidine deaminase (Shewanella baltica (strain OS155 / ATCC BAA-1091)).